The following is a 469-amino-acid chain: Glutamine synthetase (469 aa).

Residues 14-98 enclose the GS beta-grasp domain; that stretch reads NDVKYVDLRF…ITCDVLEPTT (85 aa). The GS catalytic domain occupies 106 to 469; that stretch reads PRGIAKKAEA…PVEFDMYYSG (364 aa). 2 residues coordinate Mg(2+): glutamate 131 and glutamate 133. Position 209 (glutamate 209) interacts with ATP. Mg(2+) is bound by residues glutamate 214 and glutamate 221. Residues 265–266 and glycine 266 contribute to the L-glutamate site; that span reads NG. Histidine 270 lines the Mg(2+) pocket. ATP-binding positions include 272–274 and serine 274; that span reads HQS. L-glutamate is bound by residues arginine 322, glutamate 328, and arginine 340. The ATP site is built by arginine 340, arginine 345, and lysine 353. Position 358 (glutamate 358) interacts with Mg(2+). Arginine 360 lines the L-glutamate pocket. Residue tyrosine 398 is modified to O-AMP-tyrosine.

The protein belongs to the glutamine synthetase family. Oligomer of 12 subunits arranged in the form of two hexameric ring. It depends on Mg(2+) as a cofactor.

It is found in the cytoplasm. It carries out the reaction L-glutamate + NH4(+) + ATP = L-glutamine + ADP + phosphate + H(+). The activity of this enzyme could be controlled by adenylation under conditions of abundant glutamine. Functionally, catalyzes the ATP-dependent biosynthesis of glutamine from glutamate and ammonia. The sequence is that of Glutamine synthetase from Bradyrhizobium diazoefficiens (strain JCM 10833 / BCRC 13528 / IAM 13628 / NBRC 14792 / USDA 110).